Consider the following 426-residue polypeptide: Stationary phase-inducible protein CsiE (426 aa).

2 PRD domains span residues 120–225 (ARNF…DPLR) and 229–336 (QRDR…ENDL).

This chain is Stationary phase-inducible protein CsiE (csiE), found in Escherichia coli (strain K12).